The primary structure comprises 32 residues: SRKQKFDKKFIKLVIVVDHSMVXKXNNDLIAI.

The Peptidase M12B domain occupies 10–32; sequence FIKLVIVVDHSMVXKXNNDLIAI.

It belongs to the venom metalloproteinase (M12B) family. P-III subfamily. P-IIId sub-subfamily. As to quaternary structure, heterodimer of a metalloproteinase subunit and a regulatory subunit comprising two disulfide-linked lectins (14 kDa and 17 kDa chains) (AC Q9PRP7 and AC Q9PRP8). Requires Zn(2+) as cofactor. As to expression, expressed by the venom gland.

It localises to the secreted. In terms of biological role, calcium-dependent prothrombin (F2) activator. This protein may activate prothrombin via recognition by the regulatory subunit of the calcium ion bound conformation of its gamma-carboxyglutamic acid (GLA) domain, and the subsequent conversion of prothrombin to active thrombin is catalyzed by the catalytic subunit. The chain is Zinc metalloproteinase carinactivase-1 catalytic subunit from Echis carinatus (Saw-scaled viper).